Here is a 445-residue protein sequence, read N- to C-terminus: Exodeoxyribonuclease 7 large subunit (445 aa).

Belongs to the XseA family. Heterooligomer composed of large and small subunits.

The protein localises to the cytoplasm. The catalysed reaction is Exonucleolytic cleavage in either 5'- to 3'- or 3'- to 5'-direction to yield nucleoside 5'-phosphates.. Functionally, bidirectionally degrades single-stranded DNA into large acid-insoluble oligonucleotides, which are then degraded further into small acid-soluble oligonucleotides. The sequence is that of Exodeoxyribonuclease 7 large subunit from Xanthomonas oryzae pv. oryzae (strain PXO99A).